The chain runs to 234 residues: Phosphoglycolate phosphatase (234 aa).

Asp-15 serves as the catalytic Nucleophile. Mg(2+) contacts are provided by Asp-15, Asp-17, and Asp-177.

This sequence belongs to the HAD-like hydrolase superfamily. CbbY/CbbZ/Gph/YieH family. As to quaternary structure, monomer. It depends on Mg(2+) as a cofactor. Chloride is required as a cofactor.

The enzyme catalyses 2-phosphoglycolate + H2O = glycolate + phosphate. Its pathway is organic acid metabolism; glycolate biosynthesis; glycolate from 2-phosphoglycolate: step 1/1. Its function is as follows. Specifically catalyzes the dephosphorylation of 2-phosphoglycolate. Is involved in the dissimilation of the intracellular 2-phosphoglycolate formed during the DNA repair of 3'-phosphoglycolate ends, a major class of DNA lesions induced by oxidative stress. The chain is Phosphoglycolate phosphatase from Photorhabdus laumondii subsp. laumondii (strain DSM 15139 / CIP 105565 / TT01) (Photorhabdus luminescens subsp. laumondii).